The sequence spans 133 residues: Snaclec purpureotin subunit alpha (133 aa).

Cystine bridges form between C2–C13, C30–C127, and C102–C119. The C-type lectin domain maps to 9–128; sequence FKQYCYQIIK…CEQKHIFMCK (120 aa).

It belongs to the snaclec family. As to quaternary structure, homodimer (non-covalently linked) of heterodimer of alpha and beta subunits (disulfide-linked). In terms of tissue distribution, expressed by the venom gland.

The protein resides in the secreted. In terms of biological role, snaclec that induces platelet aggregation without any cofactor in a dose-dependent manner. Its platelet aggregation effect is blocked by echicetin, suggesting it is a GPIb-binding protein which binds to the same or a closely related GPIb site on platelets as echicetin. The polypeptide is Snaclec purpureotin subunit alpha (Trimeresurus purpureomaculatus (Mangrove pit viper)).